The primary structure comprises 537 residues: tRNA(His) guanylyltransferase 2 (537 aa).

Mg(2+) contacts are provided by Asp-307, Gly-308, and Asp-354. Residues 307–312 and 353–354 contribute to the GTP site; these read DGCHFH and SD.

Belongs to the tRNA(His) guanylyltransferase family. The cofactor is Mg(2+).

The protein localises to the nucleus. The protein resides in the nucleoplasm. It carries out the reaction a 5'-end ribonucleotide-tRNA(His) + GTP + ATP + H2O = a 5'-end phospho-guanosine-ribonucleotide-tRNA(His) + AMP + 2 diphosphate + H(+). Adds a GMP to the 5'-end of tRNA(His) after transcription and RNase P cleavage. This is tRNA(His) guanylyltransferase 2 (THG2) from Arabidopsis thaliana (Mouse-ear cress).